Consider the following 795-residue polypeptide: Phenylalanine--tRNA ligase beta subunit (795 aa).

The tRNA-binding domain occupies 39–148 (AGRFTGVVVG…AEAPIGQDIR (110 aa)). Residues 401–476 (PQPATITLRR…RVYGYDAIPN (76 aa)) form the B5 domain. Mg(2+) is bound by residues Asp454, Asp460, Glu463, and Glu464. Positions 701–794 (SRFPANRRDI…LKQRFQASLR (94 aa)) constitute an FDX-ACB domain.

The protein belongs to the phenylalanyl-tRNA synthetase beta subunit family. Type 1 subfamily. Tetramer of two alpha and two beta subunits. It depends on Mg(2+) as a cofactor.

It localises to the cytoplasm. It catalyses the reaction tRNA(Phe) + L-phenylalanine + ATP = L-phenylalanyl-tRNA(Phe) + AMP + diphosphate + H(+). This is Phenylalanine--tRNA ligase beta subunit from Sodalis glossinidius (strain morsitans).